A 57-amino-acid polypeptide reads, in one-letter code: MAVPFRRTSKTRKRLRRTHFKLQVPGMVECPNCGEMKLAHRVCKSCGTYKGREVVNK.

Belongs to the bacterial ribosomal protein bL32 family.

The protein is Large ribosomal subunit protein bL32 of Geobacillus sp. (strain WCH70).